Here is a 50-residue protein sequence, read N- to C-terminus: Sperm protamine P1 (50 aa).

It belongs to the protamine P1 family. As to quaternary structure, cross-linked by interchain disulfide bonds around the DNA-helix. In terms of tissue distribution, testis.

It is found in the nucleus. Its subcellular location is the chromosome. Functionally, protamines substitute for histones in the chromatin of sperm during the haploid phase of spermatogenesis. They compact sperm DNA into a highly condensed, stable and inactive complex. The sequence is that of Sperm protamine P1 (PRM1) from Pan paniscus (Pygmy chimpanzee).